We begin with the raw amino-acid sequence, 101 residues long: MIPGEYDIQPGDIELNAGRRTLALSVANTGDRPIQVGSHYHFFEVNDALAFDRPATRGMRLNIAAGTAVRFEPGQSREVELVEIGGGRRVYGFAGRVMGDL.

Belongs to the urease beta subunit family. Heterotrimer of UreA (gamma), UreB (beta) and UreC (alpha) subunits. Three heterotrimers associate to form the active enzyme.

It localises to the cytoplasm. It catalyses the reaction urea + 2 H2O + H(+) = hydrogencarbonate + 2 NH4(+). The protein operates within nitrogen metabolism; urea degradation; CO(2) and NH(3) from urea (urease route): step 1/1. This is Urease subunit beta from Pseudomonas aeruginosa (strain LESB58).